A 183-amino-acid chain; its full sequence is Helofensin-2 (183 aa).

The first 26 residues, 1-26, serve as a signal peptide directing secretion; sequence MQMDWLFIAVISGIGLLSSGVPGTQG. Residues 27 to 64 form a C(6)C(4)C(9)C(6)CC 1; approximate repeat; it reads AYTTEQCRALNGSCNFYACFPKNVIIGKCDWWGWSCCA. The stretch at 65–101 is one C(6)C(4)C(9)C(6)CC 2; approximate repeat; the sequence is RTPLERCTAKKGTCTKTGCTKTDTDHGPCDGGAQCCQ. The C(6)C(4)C(9)C(6)CC 3; approximate repeat unit spans residues 102-139; it reads RDPVKYCKFHGNVCGRGKCPMDHIPIGEQCMPGYPCCK. One copy of the C(6)C(4)C(9)C(6)CC 4; approximate repeat lies at 140-177; it reads RDGPAYCKSKGGKCLRRCSQIVPTDIIGVCADGVPCCK.

The protein belongs to the beta-defensin family. Helofensin subfamily. Expressed by the mandibular venom gland.

It is found in the secreted. In terms of biological role, lethal toxin which possesses an inhibitory effect on direct electrical stimulation of the isolated hemi-diaphragm of mice. Neither hemorrhagic nor hemolytic activities are detected. Phospholipase A2 activity, proteolytic activity and arginine esterolytic activity are absent. The protein is Helofensin-2 of Heloderma suspectum cinctum (Banded Gila monster).